Here is a 513-residue protein sequence, read N- to C-terminus: ATP synthase subunit alpha (513 aa).

169–176 serves as a coordination point for ATP; that stretch reads GDRQTGKT.

It belongs to the ATPase alpha/beta chains family. As to quaternary structure, F-type ATPases have 2 components, CF(1) - the catalytic core - and CF(0) - the membrane proton channel. CF(1) has five subunits: alpha(3), beta(3), gamma(1), delta(1), epsilon(1). CF(0) has three main subunits: a(1), b(2) and c(9-12). The alpha and beta chains form an alternating ring which encloses part of the gamma chain. CF(1) is attached to CF(0) by a central stalk formed by the gamma and epsilon chains, while a peripheral stalk is formed by the delta and b chains.

Its subcellular location is the cell inner membrane. The catalysed reaction is ATP + H2O + 4 H(+)(in) = ADP + phosphate + 5 H(+)(out). Functionally, produces ATP from ADP in the presence of a proton gradient across the membrane. The alpha chain is a regulatory subunit. This chain is ATP synthase subunit alpha, found in Shewanella baltica (strain OS223).